The chain runs to 2210 residues: MAPVVSRDQCKPKTPKPHRPAPPHRCTTRCPEDCGWYVGRCSCPNVCQREGWDDFFVADKVKPPSYVASKTSVADVVDWLLEEDPATDGPSEFDLTQFFQAYTDKSHQIHRDYAPDQLAQALDMAYILSVDPPDIKLPEYEATRFTHDTSYKGKLPKWLRVYGIKSRELAKKAVTNIRGGAHWAKGLFKQMWDSLPGWSEVEAYFKAFFAGIITGVEDALSKSPSSVWTSLKLTPLLYIWRNINECSDIAVILGAFWATLELYNIPSKVYDLVSTALGPMVQELARKVINVVKGDGSGPKQEGGRPSFSIPGVLLATFLSAIILGSMPSDGLIKKILRGCATAAGLVGGFNAVKSIITTVQGASACKDVKKLASQLMCVTTMAATVSTRGERQVLASMLNDLNESVRERLVDPAYASLVPQLSAMSNKIVELSTMNASALSAARKRTPAKIIVLCGPPGHGKSVAAHKLAKMLNPNEPSIWNPFSDHHDEYTAEEVMVIDETPAEPGQWIEDLIAMGSNSPFVPNYDRVENKTRCFDSKYVIITTNHNPLINPTHTRAAALARRLTLVYVNSPDVADFLRQHPGVPPPATLFKADCSHLHFDIHPYNSIGTTAIVGHNGTTPVPRAKRVSLEGLCKHVKEMPDREGPPDGVPERMVLVAPDKGTARFVEAVINTYHNSGLVAQPAAWDTTPQPYQLAVTWQGSNSTVTGQRWDCNPQTPFVAPHFTRNMFKRVLGTEVPEYHLLAYACRITSSSLGDKSLPVPNPTVVINDPSPTRLALALMRHLKNPIASGLRVVWDLFRGCATGPKRLFTWALSQEWNPMPVTTAFTFPAGTVILHTAGGVRVVVLPPGPQFGLTEVARLADHSGQDDPVVPDMFGATWTELLWRLLKVIGTFLANYGVAIAGLTLSIAAFKTANKSAKNDRQGWLSGSGVALSDEEYDEWMKYSKKKGKKINADEFLQLRHRAAMGNDDDDARDYRSFYTAYQLGREGNNCDDIPLHPAVGPTTGGGYYVHIGNGVGVTLKHVASGEDVIKELGNDLVKIRTKHHKVGDPAMVVGDGMPVKFVTGHLVVDTRSESVVFDQTRLNVIRVKVPGLETRRGYCGLPYVNSAGQVVGLHQGSYGVGDKVITPITPEPTAPPDTIMWRGLECARSDIVTHLPHGTKYSVSPGMKEEATKCSHQPAPLGRNDPRCGQTQVAMVVKALSPYTGSPAVEKLDGCLVAAISEVRTAIQSLTPKGGFRPLTFAAAWQSLDLSTSAGALAPGKTKRDLCDPDTGMPTGKYKEELLRAWSRAGTGTALDHTYIVALKDELRPVEKVAEGKRRLIWGADARVALIASAALSPIANALKTVTNLLPVQVGVDPSSASCVSAWVNRLNRHDHCLELDYSKWDSTMSPVLINIAIDILCNTCASDGLRVAVCQTLKTRPTALVEGVAVPTKSGLPSGMPFTSQINSIVHWILWSATVRKCSLPLNIGSVNELAPFLTYGDDGLYTIPSHLTKSIDEIVSTLKGYGLSPTAPDKGMNIEIKKTSFTYMSGPVFLKRRIVLTPGGHRALLDLTSLARQPVWVNGPRRSVWDHEAQPIEIDSEVRTIQLQNVLIESAWHQPQDFNQVAALVYKSAEASGITIPRYSLEEARAIYDGRFYGIQHVSMPCNSDLIREGNMSDNKSIPEQQHESSRAMDAGATGAAAAAPAPPVAAAPASGLVGALVAEPQSGPSTEQWRTAYTLFGTVSWNANAGPGTILTVGRLGPGMNPYTQHIAAMYGGWAGGMDIRITIAGSGFIGGTLAVAAIPPGVDPESVNVLRMPHVLIDARGGVPLEVTLEDIRTSLYHPMGDANTASLVIAVMTGLINPLGTDTLSVTVQLETRPGRDWVFFSLLPPTAGVASADPSQLLTRVALATSPEVRFGTGVLGILGLPSNPSVNRVYDVQSRTRGWSFPIPSSSVFMGDARNVEHTRRVMVQSSAPNNPLSDVFPDGFPDFIPQSDTEPDGGAVIAGQVLPHPGDNDNFWRLTPVVRGNTTAAINTIPERFNQVYFINLADEEAVSAATEELRFNGIQGIFGQRTTARAVQVMQGYVPRAEHIIRPAGFAGVGPQGPNVPIGFAGTMPNFNATASGADDLVPVWGPTLVHTASLLAGTTYELAENSMYVFSVSTSTSTFELGMLANGTWLGPAQLAGTGITWTEVLSVTYMGMRFAYNPLSGQGIGGESRRL.

A disordered region spans residues 1–24 (MAPVVSRDQCKPKTPKPHRPAPPH). Residues 13–22 (KTPKPHRPAP) show a composition bias toward basic residues. The SF3 helicase domain maps to 426-585 (SNKIVELSTM…ADFLRQHPGV (160 aa)). Position 456 to 463 (456 to 463 (GPPGHGKS)) interacts with ATP. Tyrosine 940 bears the O-(5'-phospho-RNA)-tyrosine mark. The 146-residue stretch at 991–1136 (GNNCDDIPLH…KVITPITPEP (146 aa)) folds into the Peptidase C24 domain. Active-site for 3CLpro activity residues include histidine 1025, aspartate 1039, and cysteine 1103. The 123-residue stretch at 1379 to 1501 (DHCLELDYSK…TIPSHLTKSI (123 aa)) folds into the RdRp catalytic domain. A disordered region spans residues 1656–1685 (LIREGNMSDNKSIPEQQHESSRAMDAGATG).

Specific enzymatic cleavages by its own cysteine protease yield mature proteins. The protease cleaves itself from the nascent polyprotein autocatalytically. Precursor p41 can be cleaved by viral 3CLpro into protein p19 and VPg, or cleaved by host protease into protein p23/2 and protein p18. Post-translationally, VPg is uridylylated by the polymerase and is covalently attached to the 5'-end of the polyadenylated genomic and subgenomic RNAs. This uridylylated form acts as a nucleotide-peptide primer for the polymerase.

The protein localises to the virion. The protein resides in the host cytoplasm. The catalysed reaction is a ribonucleoside 5'-triphosphate + H2O = a ribonucleoside 5'-diphosphate + phosphate + H(+). It carries out the reaction Endopeptidase with a preference for cleavage when the P1 position is occupied by Glu-|-Xaa and the P1' position is occupied by Gly-|-Yaa.. It catalyses the reaction RNA(n) + a ribonucleoside 5'-triphosphate = RNA(n+1) + diphosphate. Functionally, displays NTPase activity, but no helicase activity. Induces the formation of convoluted membranes derived from the host ER. These remodeled membranes probably form the viral factories that contain the replication complex. Together with NS2 and NS4, initiates the formation of the replication complex. Viral genome-linked protein is covalently linked to the 5'-end of the positive-strand, negative-strand genomic RNAs and subgenomic RNA. Acts as a genome-linked replication primer. May recruit ribosome to viral RNA thereby promoting viral proteins translation. Interacts with host translation initiation complex to allow the translation of viral proteins. In terms of biological role, processes the polyprotein. 3CLpro-RdRp is first released by autocleavage, then all other proteins are cleaved. May cleave polyadenylate-binding protein thereby inhibiting cellular translation. Its function is as follows. Replicates genomic and antigenomic RNA by recognizing replications specific signals. Also transcribes a subgenomic mRNA by initiating RNA synthesis internally on antigenomic RNA. This sgRNA codes for structural proteins. Catalyzes the covalent attachment VPg with viral RNAs. Functionally, capsid protein self assembles to form an icosahedral capsid with a T=3 symmetry, about 35 nm in diameter, and consisting of 180 capsid proteins. A smaller form of capsid with a diameter of 23 nm might be capsid proteins assembled as icosahedron with T=1 symmetry. The capsid encapsulate VP2 proteins and genomic or subgenomic RNA. Attaches virion to target cells by binding histo-blood group antigens, inducing endocytosis of the viral particle. Acidification of the endosome induces conformational change of capsid protein thereby injecting virus genomic RNA into host cytoplasm. The polypeptide is Genome polyprotein (Bovine enteric calicivirus NB (isolate Bovine/United States/N ebraska/1980) (BEC-NB)).